The following is a 542-amino-acid chain: Sensory neuron membrane protein 2 (542 aa).

The Extracellular portion of the chain corresponds to 1-487; sequence MMVMNTELRQ…MKVLTLLDIV (487 aa). N-linked (GlcNAc...) asparagine glycosylation is found at N33, N128, N238, and N274. Intrachain disulfides connect C283-C351, C312-C378, and C353-C367. Residues 488-508 traverse the membrane as a helical segment; it reads QWVMIGSGLLLAIIMPIVYFI. Residues 509 to 542 lie on the Cytoplasmic side of the membrane; the sequence is KRRPSSGSITPTLTTTTSTVSISDGGGLGGNPQK.

Belongs to the CD36 family. Detected in the antenna, legs and wings. Higher levels of expression detected in male compared to female.

The protein resides in the cell membrane. In terms of biological role, plays an olfactory role that is not restricted to pheromone sensitivity. This Aedes aegypti (Yellowfever mosquito) protein is Sensory neuron membrane protein 2.